An 88-amino-acid polypeptide reads, in one-letter code: Cell division topological specificity factor (88 aa).

It belongs to the MinE family.

Its function is as follows. Prevents the cell division inhibition by proteins MinC and MinD at internal division sites while permitting inhibition at polar sites. This ensures cell division at the proper site by restricting the formation of a division septum at the midpoint of the long axis of the cell. The chain is Cell division topological specificity factor from Aeromonas salmonicida (strain A449).